The chain runs to 1389 residues: uncharacterized protein (1389 aa).

Residues 43–94 adopt a coiled-coil conformation; sequence STIAQRVSQLENEVAEINVALAEHVNELNSQEKRIDKLEKTVKKKKSNCSDD. Residues 294–353 are disordered; that stretch reads HKNRRSKSDNSDLSEYSSSNSDDSECTDSDGSSCSTDGSPDCTESENTESHRSHGKKKHR. Composition is skewed to low complexity over residues 304–314 and 322–335; these read SDLSEYSSSNS and SDGS…SPDC. WD repeat units lie at residues 867-907, 1017-1056, and 1115-1156; these read TFTD…VKHI, GYNE…TPSG, and GISN…ILST.

The protein resides in the virion. This is an uncharacterized protein from Acanthamoeba polyphaga (Amoeba).